Here is a 68-residue protein sequence, read N- to C-terminus: P21 prophage-derived head-stabilizing protein (68 aa).

Belongs to the lambda phage gpW family.

This Escherichia coli O6:H1 (strain CFT073 / ATCC 700928 / UPEC) protein is P21 prophage-derived head-stabilizing protein.